A 326-amino-acid polypeptide reads, in one-letter code: Tetraacyldisaccharide 4'-kinase (326 aa).

58–65 is an ATP binding site; sequence SVGGNGKT.

Belongs to the LpxK family.

The enzyme catalyses a lipid A disaccharide + ATP = a lipid IVA + ADP + H(+). Its pathway is glycolipid biosynthesis; lipid IV(A) biosynthesis; lipid IV(A) from (3R)-3-hydroxytetradecanoyl-[acyl-carrier-protein] and UDP-N-acetyl-alpha-D-glucosamine: step 6/6. Functionally, transfers the gamma-phosphate of ATP to the 4'-position of a tetraacyldisaccharide 1-phosphate intermediate (termed DS-1-P) to form tetraacyldisaccharide 1,4'-bis-phosphate (lipid IVA). In Pseudoalteromonas translucida (strain TAC 125), this protein is Tetraacyldisaccharide 4'-kinase.